Here is a 220-residue protein sequence, read N- to C-terminus: Antistasin (220 aa).

Positions 1–19 are cleaved as a signal peptide; it reads MNYLFVFLALSAAVTFANA. 6 consecutive Antistasin-like domains span residues 21 to 46, 54 to 79, 91 to 117, 120 to 145, 154 to 180, and 183 to 208; these read CNKI…ICKC, CSNR…ICRC, CDGL…KCEC, CKQF…TCKC, CDDL…KCEC, and CKNF…TCKC.

The protein belongs to the protease inhibitor I15 (antistasin) family. In terms of tissue distribution, gland cells. It is more strongly expressed in the head than in the gastric tissue.

Its subcellular location is the secreted. Its function is as follows. This highly disulfide-bonded protein is a potent inhibitor of factor Xa. Facilitates digestion of tissues and may also protect the gastric tissues from its own digestive enzymes. May have therapeutic utility as an anticoagulant. Also exhibits a strong metastatic activity. This is Antistasin from Hydra vulgaris (Hydra).